A 226-amino-acid polypeptide reads, in one-letter code: ATP synthase subunit C lysine N-methyltransferase (226 aa).

A helical transmembrane segment spans residues 35 to 55; it reads VIGGTLVALYAVATPFVAPAL. The interval 48–82 is required for mitochondrial location; sequence TPFVAPALRKLCLPYVPATTTQVKNVLKMLRSRTG.

It belongs to the ANT/ATPSC lysine N-methyltransferase family.

It localises to the mitochondrion membrane. Its function is as follows. Mitochondrial protein-lysine N-methyltransferase that promotes chronic pain. Involved in persistent inflammatory and neuropathic pain: methyltransferase activity in the mitochondria of sensory neurons promotes chronic pain via a pathway that depends on the production of reactive oxygen species (ROS) and on the engagement of spinal cord microglia. Protein-lysine N-methyltransferase activity is dependent on S-adenosyl-L-methionine. This is ATP synthase subunit C lysine N-methyltransferase (atpsckmt) from Xenopus laevis (African clawed frog).